The following is a 424-amino-acid chain: S-phase kinase-associated protein 2 (424 aa).

The interval 1–220 (MHRKHLQEIP…LSLEGLRLSD (220 aa)) is mediates interaction with hepatitis C virus non-structural protein NS5A. Positions 39–73 (SALEKEEPDSENIPQELLSNLGHPESPPRKRLKSK) are disordered. A Phosphoserine modification is found at S64. Residues 67-73 (RKRLKSK) carry the Nuclear localization signal motif. 2 positions are modified to N6-acetyllysine; by p300/EP300: K68 and K71. A phosphoserine mark is found at S72 and S75. Residues 94 to 140 (GVSWDSLPDELLLGIFSCLCLPELLKVSGVCKRWYRLASDESLWQTL) form the F-box domain. LRR repeat units lie at residues 151–176 (VTGRLLSQGVIAFRCPRSFMDQPLAE), 177–204 (HFSPFRVQHMDLSNSVIEVSTLHGILSQ), 210–234 (NLSLEGLRLSDPIVNTLAKNSNLVR), 235–257 (LNLSGCSGFSEFALQTLLSSCSR), 258–284 (LDELNLSWCFDFTEKHVQVAVAHVSET), 286–308 (TQLNLSGYRKNLQKSDLSTLVRR), 309–330 (CPNLVHLDLSDSVMLKNDCFQE), 334–356 (LNYLQHLSLSRCYDIIPETLLEL), 359–378 (IPTLKTLQVFGIVPDGTLQL), and 380–401 (KEALPHLQINCSHFTTIARPTI). S179 is subject to Phosphoserine. Positions 402 to 424 (GNKKNQEIWGIKCRLTLQKPSCL) are mediates interaction with IFI27.

Part of a SCF(SKP2) complex consisting of CUL1, RBX1, SKP1 and SKP2. Component of a SCF(SKP2)-like complex containing CUL1, SKP1, TRIM21 and SKP2. Interacts directly with CUL1 and SKP1. Interacts with CKS1. Interacts with ASB2 which is the substrate-recognition component of a probable ECS E3 ubiquitin-protein ligase complex; ASB2 is likely to bridge the formation of dimeric E3-ubiquitin-protein ligase complexes composed of an ECS complex and an SCF(SKP2) complex. Interacts with the cyclin-A-CDK2 complex. Interacts with ORC1, phosphorylated CDT1, phosphorylated RBL2, ELF4, phosphorylated RAG2, FOXO1, UBP43, MYC, TOB1, TAL1 and KMT2A/MLL1. Interacts with TRIM21. Interacts with cyclin-E. Interacts with IFI27; promotes the ubiquitin-mediated proteasomal degradation of hepatitis C virus/HCV non-structural protein NS5A. Interacts with CARM1. In terms of assembly, (Microbial infection) Interacts with hepatitis C virus/HCV non-structural protein NS5A; promotes the ubiquitin-mediated proteasomal degradation of NS5A. In terms of processing, phosphorylated on serine and threonine resudues in response to DNA damage, promoting 'Lys-63'-linked ubiquitination of NBN. Post-translationally, ubiquitinated by the APC/C complex, leading to its degradation by the proteasome. Deubiquitinated by USP13. Acetylation at Lys-68 and Lys-71 increases stability through impairment of APC/C-mediated proteolysis and promotes cytoplasmic retention. Deacetylated by SIRT3.

It localises to the cytoplasm. It is found in the nucleus. It functions in the pathway protein modification; protein ubiquitination. In terms of biological role, substrate recognition component of a SCF (SKP1-CUL1-F-box protein) E3 ubiquitin-protein ligase complex which mediates the ubiquitination and subsequent proteasomal degradation of target proteins involved in cell cycle progression, signal transduction and transcription. Specifically recognizes phosphorylated CDKN1B/p27kip and is involved in regulation of G1/S transition. Degradation of CDKN1B/p27kip also requires CKS1. Recognizes target proteins ORC1, CDT1, RBL2, KMT2A/MLL1, CDK9, RAG2, NBN, FOXO1, UBP43, YTHDF2, and probably MYC, TOB1 and TAL1. Degradation of TAL1 also requires STUB1. Recognizes CDKN1A in association with CCNE1 or CCNE2 and CDK2. Promotes ubiquitination and destruction of CDH1 in a CK1-dependent manner, thereby regulating cell migration. Following phosphorylation in response to DNA damage, mediates 'Lys-63'-linked ubiquitination of NBN, promoting ATM recruitment to DNA damage sites and DNA repair via homologous recombination. Its function is as follows. Through the ubiquitin-mediated proteasomal degradation of hepatitis C virus non-structural protein 5A, has an antiviral activity towards that virus. The protein is S-phase kinase-associated protein 2 (SKP2) of Homo sapiens (Human).